We begin with the raw amino-acid sequence, 208 residues long: Transmembrane emp24 domain-containing protein p24beta2 (208 aa).

Positions 1-21 (MSLKGTIVLLGLLWSFQATLG) are cleaved as a signal peptide. Over 22-176 (IRFVIDREEC…ENMSKRAVHK (155 aa)) the chain is Lumenal. Residues 29 to 116 (EECFSHKAEY…HETIDFDVQL (88 aa)) enclose the GOLD domain. Residues 134-149 (LMEQISKLEEALYNIQ) adopt a coiled-coil conformation. Asparagine 168 carries N-linked (GlcNAc...) asparagine glycosylation. Residues 177 to 195 (ALFESFALIGASFLQVYLL) traverse the membrane as a helical segment. The Cytoplasmic segment spans residues 196–208 (RRLFERKLGMSRV). The short motif at 198–199 (LF) is the COPII vesicle coat-binding element. The COPI vesicle coat-binding motif lies at 198–208 (LFERKLGMSRV). A Required for the export from the endoplasmic reticulum to the Golgi motif is present at residues 207–208 (RV).

It belongs to the EMP24/GP25L family. In terms of assembly, probably oligomerizes with other members of the EMP24/GP25L family. Associates with the COPI vesicle coat (coatomer). Associates with the COPII vesicle coat (coatomer). Interacts with p24delta5.

It localises to the golgi apparatus. Its subcellular location is the cis-Golgi network membrane. The protein localises to the golgi stack membrane. Involved in vesicular protein trafficking. Mainly functions in the early secretory pathway but also in post-Golgi membranes. Thought to act as cargo receptor at the lumenal side for incorporation of secretory cargo molecules into transport vesicles and to be involved in vesicle coat formation at the cytoplasmic side. Interacts with p24delta5 at endoplasmic reticulum export sites for endoplasmic reticulum exit and coupled transport to the Golgi apparatus. This Arabidopsis thaliana (Mouse-ear cress) protein is Transmembrane emp24 domain-containing protein p24beta2.